A 396-amino-acid polypeptide reads, in one-letter code: Elongation factor Tu 2 (396 aa).

One can recognise a tr-type G domain in the interval 10–206 (KPHCNVGTIG…AVDDYIPQPE (197 aa)). Residues 19–26 (GHVDHGKT) form a G1 region. 19–26 (GHVDHGKT) provides a ligand contact to GTP. Thr-26 serves as a coordination point for Mg(2+). Residues 60–64 (GITIS) are G2. The G3 stretch occupies residues 81 to 84 (DCPG). GTP is bound by residues 81–85 (DCPGH) and 136–139 (NKCD). Residues 136 to 139 (NKCD) are G4. The interval 174-176 (SAL) is G5.

The protein belongs to the TRAFAC class translation factor GTPase superfamily. Classic translation factor GTPase family. EF-Tu/EF-1A subfamily. In terms of assembly, monomer.

It is found in the cytoplasm. The enzyme catalyses GTP + H2O = GDP + phosphate + H(+). GTP hydrolase that promotes the GTP-dependent binding of aminoacyl-tRNA to the A-site of ribosomes during protein biosynthesis. This Rhodospirillum rubrum (strain ATCC 11170 / ATH 1.1.1 / DSM 467 / LMG 4362 / NCIMB 8255 / S1) protein is Elongation factor Tu 2.